The chain runs to 213 residues: Octanoyltransferase (213 aa).

The BPL/LPL catalytic domain occupies 32 to 207 (DSTLDEIWLV…NILALLNNPD (176 aa)). Substrate contacts are provided by residues 71–78 (RGGQVTYH), 138–140 (SLG), and 151–153 (GLA). Cysteine 169 functions as the Acyl-thioester intermediate in the catalytic mechanism.

It belongs to the LipB family.

It is found in the cytoplasm. It catalyses the reaction octanoyl-[ACP] + L-lysyl-[protein] = N(6)-octanoyl-L-lysyl-[protein] + holo-[ACP] + H(+). It participates in protein modification; protein lipoylation via endogenous pathway; protein N(6)-(lipoyl)lysine from octanoyl-[acyl-carrier-protein]: step 1/2. Its function is as follows. Catalyzes the transfer of endogenously produced octanoic acid from octanoyl-acyl-carrier-protein onto the lipoyl domains of lipoate-dependent enzymes. Lipoyl-ACP can also act as a substrate although octanoyl-ACP is likely to be the physiological substrate. The sequence is that of Octanoyltransferase from Escherichia coli O8 (strain IAI1).